The primary structure comprises 95 residues: UPF0298 protein LVIS_1401 (95 aa).

Belongs to the UPF0298 family.

The protein resides in the cytoplasm. The chain is UPF0298 protein LVIS_1401 from Levilactobacillus brevis (strain ATCC 367 / BCRC 12310 / CIP 105137 / JCM 1170 / LMG 11437 / NCIMB 947 / NCTC 947) (Lactobacillus brevis).